The primary structure comprises 263 residues: Type III pantothenate kinase (263 aa).

14–21 (DIGNTSVN) contacts ATP. 115–118 (GADR) is a binding site for substrate. The active-site Proton acceptor is the aspartate 117. Aspartate 137 serves as a coordination point for K(+). Threonine 140 is an ATP binding site. Substrate is bound at residue threonine 192.

This sequence belongs to the type III pantothenate kinase family. Homodimer. It depends on NH4(+) as a cofactor. K(+) is required as a cofactor.

It is found in the cytoplasm. The enzyme catalyses (R)-pantothenate + ATP = (R)-4'-phosphopantothenate + ADP + H(+). Its pathway is cofactor biosynthesis; coenzyme A biosynthesis; CoA from (R)-pantothenate: step 1/5. In terms of biological role, catalyzes the phosphorylation of pantothenate (Pan), the first step in CoA biosynthesis. This is Type III pantothenate kinase from Dehalococcoides mccartyi (strain CBDB1).